The primary structure comprises 237 residues: Periplasmic deoxyribonuclease (237 aa).

Positions 1 to 27 are cleaved as a signal peptide; sequence MSRPSRVLGLPLLSLGLTLLVSTPLQA.

The protein belongs to the EndA/NucM nuclease family.

It is found in the periplasm. Endonuclease which is capable of degrading plasmid DNA. This Aeromonas hydrophila protein is Periplasmic deoxyribonuclease (dnsH).